A 515-amino-acid polypeptide reads, in one-letter code: MSTSSSVTQKNLDTNAEALKKEDKVLSEFDIQDERPKSLLWESAFVGVLCSAQLMTQAGLGQSLAPLHIIGNSFGTTNAGQLSWFASAYSLTVGTFILIAGRLGDIFGHKKFFVLGFFWYALWSLLAGFSVYSNQIFFDCCRAFQGMGPAFLLPNAIAILGRTYKPGRRKNMVFSLFGASAPGGFFLGAVFSSMLGQLAWWPWAYWIMGIACFVLAVAGYFVIPHTPMPSRDASSFKLLERIDFAGSVTGVVGLILFNFAWNQGPVVGWQTPYTYALLIVGTFFLVIFAYIESRAAFPLLPFAALSSDTAFVLSCIAAGWASFGIWIFYTWQFMEDSRGQTPLLSSAQFSPVAISGFCAAVTTGFLLSHTPPSTVMLFAMTAFTVGTILIATAPVHQTYWAQTFVSIIVMPWGMDMSFPAATIMLSDSMPHEHQGLAASLVNTVVNYSISIGLGIAGTIESRVNDGGAKPLKGYRCSWYMGIGLSGLGIFVAATYAWSTFMKSKKRISEKQHFIE.

Over 1 to 78 (MSTSSSVTQK…IIGNSFGTTN (78 aa)) the chain is Extracellular. A helical transmembrane segment spans residues 79 to 99 (AGQLSWFASAYSLTVGTFILI). Residues 100-111 (AGRLGDIFGHKK) lie on the Cytoplasmic side of the membrane. Residues 112–132 (FFVLGFFWYALWSLLAGFSVY) form a helical membrane-spanning segment. Residues 133-140 (SNQIFFDC) lie on the Extracellular side of the membrane. The chain crosses the membrane as a helical span at residues 141–161 (CRAFQGMGPAFLLPNAIAILG). Topologically, residues 162–171 (RTYKPGRRKN) are cytoplasmic. The helical transmembrane segment at 172-192 (MVFSLFGASAPGGFFLGAVFS) threads the bilayer. The Extracellular portion of the chain corresponds to 193–202 (SMLGQLAWWP). Residues 203–223 (WAYWIMGIACFVLAVAGYFVI) form a helical membrane-spanning segment. Over 224–241 (PHTPMPSRDASSFKLLER) the chain is Cytoplasmic. A helical transmembrane segment spans residues 242–262 (IDFAGSVTGVVGLILFNFAWN). Residues 263–270 (QGPVVGWQ) are Extracellular-facing. Residues 271 to 291 (TPYTYALLIVGTFFLVIFAYI) form a helical membrane-spanning segment. At 292–310 (ESRAAFPLLPFAALSSDTA) the chain is on the cytoplasmic side. The chain crosses the membrane as a helical span at residues 311–331 (FVLSCIAAGWASFGIWIFYTW). Residues 332-346 (QFMEDSRGQTPLLSS) lie on the Extracellular side of the membrane. The chain crosses the membrane as a helical span at residues 347–367 (AQFSPVAISGFCAAVTTGFLL). Residues 368 to 374 (SHTPPST) lie on the Cytoplasmic side of the membrane. Residues 375–395 (VMLFAMTAFTVGTILIATAPV) traverse the membrane as a helical segment. Residues 396–403 (HQTYWAQT) lie on the Extracellular side of the membrane. A helical transmembrane segment spans residues 404-424 (FVSIIVMPWGMDMSFPAATIM). The Cytoplasmic segment spans residues 425 to 435 (LSDSMPHEHQG). Residues 436-456 (LAASLVNTVVNYSISIGLGIA) form a helical membrane-spanning segment. Topologically, residues 457–479 (GTIESRVNDGGAKPLKGYRCSWY) are extracellular. The chain crosses the membrane as a helical span at residues 480–500 (MGIGLSGLGIFVAATYAWSTF). At 501–515 (MKSKKRISEKQHFIE) the chain is on the cytoplasmic side.

It belongs to the major facilitator superfamily.

The protein resides in the cell membrane. In terms of biological role, low affinity ammonium transporter of the plasma membrane. May be involved in drug resistance through pumping them out of the cell. The chain is Low affinity ammonium transporter from Saccharomyces cerevisiae (strain ATCC 204508 / S288c) (Baker's yeast).